The sequence spans 410 residues: Proteasomal ubiquitin receptor ADRM1 (410 aa).

Positions 17-130 (SSSKYLVEFR…RKVNEYLNNP (114 aa)) constitute a Pru domain. The residue at position 18 (S18) is a Phosphoserine. A compositionally biased stretch (low complexity) spans 191–257 (GSGGPATSSS…PAAQTPSLPA (67 aa)). Disordered stretches follow at residues 191–264 (GSGG…SSTQ) and 381–410 (FAKA…MSLD). In terms of domain architecture, DEUBAD spans 281 to 395 (PAMPTEGSGV…EGSDSKTDDG (115 aa)). Residues 381–401 (FAKAMEGSDSKTDDGDSKDKK) show a composition bias toward basic and acidic residues.

The protein belongs to the ADRM1 family. As to quaternary structure, component of the 19S proteasome regulatory particle complex. The 26S proteasome consists of a 20S core particle (CP) and two 19S regulatory subunits (RP).

It localises to the cytoplasm. The protein resides in the nucleus. Component of the 26S proteasome, a multiprotein complex involved in the ATP-dependent degradation of ubiquitinated proteins. This complex plays a key role in the maintenance of protein homeostasis by removing misfolded or damaged proteins, which could impair cellular functions, and by removing proteins whose functions are no longer required. Therefore, the proteasome participates in numerous cellular processes, including cell cycle progression, apoptosis, or DNA damage repair. Within the complex, functions as a proteasomal ubiquitin receptor. This is Proteasomal ubiquitin receptor ADRM1 (adrm1b) from Danio rerio (Zebrafish).